Consider the following 729-residue polypeptide: Fatty acid oxidation complex subunit alpha (729 aa).

The segment at 1-189 is enoyl-CoA hydratase/isomerase; sequence MLYKGDTLYL…KIGLVDGVVK (189 aa). Position 296 (Asp-296) interacts with substrate. The tract at residues 311–729 is 3-hydroxyacyl-CoA dehydrogenase; the sequence is ETPKQAAVLG…ARPVGDLKTA (419 aa). Residues Met-324, Asp-343, 400 to 402, Lys-407, and Ser-429 each bind NAD(+); that span reads VVE. Residue His-450 is the For 3-hydroxyacyl-CoA dehydrogenase activity of the active site. Residue Asn-453 coordinates NAD(+). The substrate site is built by Asn-500 and Tyr-660. Residues 708-729 form a disordered region; that stretch reads RHNEPYYPPVEPARPVGDLKTA.

It in the N-terminal section; belongs to the enoyl-CoA hydratase/isomerase family. In the C-terminal section; belongs to the 3-hydroxyacyl-CoA dehydrogenase family. Heterotetramer of two alpha chains (FadB) and two beta chains (FadA).

It carries out the reaction a (3S)-3-hydroxyacyl-CoA + NAD(+) = a 3-oxoacyl-CoA + NADH + H(+). It catalyses the reaction a (3S)-3-hydroxyacyl-CoA = a (2E)-enoyl-CoA + H2O. The catalysed reaction is a 4-saturated-(3S)-3-hydroxyacyl-CoA = a (3E)-enoyl-CoA + H2O. The enzyme catalyses (3S)-3-hydroxybutanoyl-CoA = (3R)-3-hydroxybutanoyl-CoA. It carries out the reaction a (3Z)-enoyl-CoA = a 4-saturated (2E)-enoyl-CoA. It catalyses the reaction a (3E)-enoyl-CoA = a 4-saturated (2E)-enoyl-CoA. The protein operates within lipid metabolism; fatty acid beta-oxidation. Its function is as follows. Involved in the aerobic and anaerobic degradation of long-chain fatty acids via beta-oxidation cycle. Catalyzes the formation of 3-oxoacyl-CoA from enoyl-CoA via L-3-hydroxyacyl-CoA. It can also use D-3-hydroxyacyl-CoA and cis-3-enoyl-CoA as substrate. The polypeptide is Fatty acid oxidation complex subunit alpha (Escherichia coli O17:K52:H18 (strain UMN026 / ExPEC)).